The chain runs to 69 residues: Light-harvesting protein B-1015 beta chain (69 aa).

The Cytoplasmic segment spans residues alanine 2–glycine 21. A bacteriochlorophyll contacts are provided by histidine 20 and histidine 38. A helical membrane pass occupies residues isoleucine 22 to alanine 44. Topologically, residues arginine 45–valine 56 are periplasmic. A propeptide spanning residues asparagine 57–valine 69 is cleaved from the precursor.

This sequence belongs to the antenna complex beta subunit family. In terms of assembly, the core complex is formed by different alpha and beta chains, binding bacteriochlorophyll molecules, and arranged most probably in tetrameric structures disposed around the reaction center. The non-pigmented gamma chains may constitute additional components.

The protein resides in the cell inner membrane. In terms of biological role, antenna complexes are light-harvesting systems, which transfer the excitation energy to the reaction centers. The sequence is that of Light-harvesting protein B-1015 beta chain (pufB) from Blastochloris viridis (Rhodopseudomonas viridis).